We begin with the raw amino-acid sequence, 234 residues long: Sugar fermentation stimulation protein homolog (234 aa).

It belongs to the SfsA family.

In Shewanella pealeana (strain ATCC 700345 / ANG-SQ1), this protein is Sugar fermentation stimulation protein homolog.